Here is a 90-residue protein sequence, read N- to C-terminus: Protein RALF-like 29 (90 aa).

An N-terminal signal peptide occupies residues 1-25 (MIKTKEVTFVTILIVLCVFISTIHA). Intrachain disulfides connect C41-C50 and C63-C69.

It belongs to the plant rapid alkalinization factor (RALF) family.

It localises to the secreted. Its function is as follows. Cell signaling peptide that may regulate plant stress, growth, and development. Mediates a rapid alkalinization of extracellular space by mediating a transient increase in the cytoplasmic Ca(2+) concentration leading to a calcium-dependent signaling events through a cell surface receptor and a concomitant activation of some intracellular mitogen-activated protein kinases. This Arabidopsis thaliana (Mouse-ear cress) protein is Protein RALF-like 29 (RALFL29).